Reading from the N-terminus, the 1158-residue chain is Protein transport protein Sec31B (1158 aa).

WD repeat units lie at residues 4 to 47, 65 to 110, 119 to 159, 166 to 206, 209 to 254, 258 to 298, and 301 to 341; these read KELE…EIFE, VSSR…SSGK, KHTG…VPMT, NPPE…PIIK, SHSS…SPLK, SHSR…VVYK, and TQSS…WEAQ. The stretch at 376 to 407 is one WD 8; interaction with SEC13 repeat; it reads SFAFGGKLVTFGLPSIPVQPVAQACSRPVFIS. Disordered regions lie at residues 485 to 520, 797 to 843, and 968 to 1010; these read LKSD…HTAK, TSSY…SSDH, and GPQD…PEPQ. Positions 822 to 840 are enriched in low complexity; the sequence is QPSSVMPFSPSQPSPSQGS.

It belongs to the WD repeat SEC31 family. In terms of assembly, COPII is composed of at least 5 proteins: the SEC23/24 complex, the SEC13/31 complex and SAR1. SEC13 and SEC31 make a 2:2 tetramer that forms the edge element of the COPII outer coat. The tetramer self-assembles in multiple copies to form the complete polyhedral cage. Interacts (via WD 8) with SEC13. Interacts with SEC31A. Monoubiquitinated by the BCR(KLHL12) E3 ubiquitin ligase complex, leading to regulate the size of COPII coats.

It is found in the cytoplasm. It localises to the cytoplasmic vesicle. The protein localises to the COPII-coated vesicle membrane. Its subcellular location is the endoplasmic reticulum membrane. Its function is as follows. As a component of the coat protein complex II (COPII), may function in vesicle budding and cargo export from the endoplasmic reticulum. This is Protein transport protein Sec31B (Sec31b) from Mus musculus (Mouse).